The primary structure comprises 241 residues: 2-C-methyl-D-erythritol 4-phosphate cytidylyltransferase (241 aa).

Belongs to the IspD/TarI cytidylyltransferase family. IspD subfamily.

The catalysed reaction is 2-C-methyl-D-erythritol 4-phosphate + CTP + H(+) = 4-CDP-2-C-methyl-D-erythritol + diphosphate. It functions in the pathway isoprenoid biosynthesis; isopentenyl diphosphate biosynthesis via DXP pathway; isopentenyl diphosphate from 1-deoxy-D-xylulose 5-phosphate: step 2/6. In terms of biological role, catalyzes the formation of 4-diphosphocytidyl-2-C-methyl-D-erythritol from CTP and 2-C-methyl-D-erythritol 4-phosphate (MEP). The chain is 2-C-methyl-D-erythritol 4-phosphate cytidylyltransferase from Mycobacterium leprae (strain Br4923).